The chain runs to 249 residues: 3alpha-hydroxy bile acid-CoA-ester 3-dehydrogenase 1/3 (249 aa).

NAD(+) contacts are provided by residues 15–18 (TRGI), Glu-38, Glu-42, and Asn-92. Substrate is bound at residue Ser-144. Residues Tyr-157 and Lys-161 each act as proton donor/acceptor in the active site. NAD(+) is bound by residues Lys-161 and 190 to 192 (VDT).

It belongs to the short-chain dehydrogenases/reductases (SDR) family. In terms of assembly, homotetramer.

It catalyses the reaction a 3alpha-hydroxy bile acid CoA + NAD(+) = a 3-oxo bile acid CoA + NADH + H(+). The enzyme catalyses choloyl-CoA + NAD(+) = 7alpha,12alpha-dihydroxy-3-oxochol-24-oyl-CoA + NADH + H(+). It carries out the reaction chenodeoxycholoyl-CoA + NAD(+) = 7alpha-hydroxy-3-oxochol-24-oyl-CoA + NADH + H(+). The catalysed reaction is deoxycholoyl-CoA + NAD(+) = 12alpha-hydroxy-3-oxocholan-24-oyl-CoA + NADH + H(+). It catalyses the reaction lithocholoyl-CoA + NAD(+) = 3-oxocholan-24-oyl-CoA + NADH + H(+). It functions in the pathway lipid metabolism; bile acid biosynthesis. Functionally, involved in the multi-step bile acid 7alpha-dehydroxylation pathway that transforms primary bile acids to secondary bile acids in the human gut. Catalyzes the oxidation of C3-hydroxyl group of CoA conjugated bile acids generating a C3-oxo bile acid intermediate. Can use choloyl-CoA, chenodeoxycholoyl-CoA, deoxycholoyl-CoA, and lithocholoyl-CoA as substrates with similar efficiency. Highly prefers NAD over NADP as cosubstrate. Also catalyzes the reverse reactions; in vitro, the preferred direction of reaction depends on the pH. Has very little activity with unconjugated (non-CoA) bile acid substrates. The chain is 3alpha-hydroxy bile acid-CoA-ester 3-dehydrogenase 1/3 (baiA1) from Clostridium scindens (strain JCM 10418 / VPI 12708).